Reading from the N-terminus, the 177-residue chain is Protein Flattop (177 aa).

Residues 113–177 are disordered; it reads ILGKPHDPDS…TPGPQRPAKS (65 aa). Basic and acidic residues predominate over residues 115–124; the sequence is GKPHDPDSQK. Positions 132–163 are enriched in polar residues; the sequence is TKTVQQARSPTIIPSSPAANLNSPDELQSSHP.

The protein belongs to the Flattop family. In terms of assembly, microtubule inner protein component of sperm flagellar doublet microtubules. Interacts with DLG3. As to expression, expressed in airway epithelial cells.

The protein resides in the cytoplasm. It localises to the cytoskeleton. It is found in the cilium basal body. The protein localises to the cell projection. Its subcellular location is the cilium. The protein resides in the apical cell membrane. It localises to the cilium axoneme. It is found in the flagellum axoneme. In terms of biological role, microtubule inner protein (MIP) part of the dynein-decorated doublet microtubules (DMTs) in cilia axoneme. Acts as a regulator of cilium basal body docking and positioning in mono- and multiciliated cells. Regulates basal body docking and cilia formation in multiciliated lung cells. Regulates kinocilium positioning and stereocilia bundle morphogenesis in the inner ear. The sequence is that of Protein Flattop from Homo sapiens (Human).